The chain runs to 151 residues: Protein Turandot Z (151 aa).

Positions 1–23 are cleaved as a signal peptide; the sequence is MSRLIHLSFVLALLACLTGTISA.

This sequence belongs to the Turandot family.

It is found in the secreted. Its function is as follows. A humoral factor that may play a role in stress tolerance. This is Protein Turandot Z from Drosophila persimilis (Fruit fly).